We begin with the raw amino-acid sequence, 283 residues long: Cuticle collagen 49 (283 aa).

Residues 1 to 19 form the signal peptide; sequence MWKFVIGSVSTAAFFVSVC. The segment at 90–283 is disordered; sequence EPTKNCPAGP…GYCTCPPRTA (194 aa). The span at 127-139 shows a compositional bias: basic and acidic residues; it reads VVIHDMPNPKECI. Positions 143-155 are enriched in pro residues; it reads AGPPGPPGPPGPL. The segment covering 185–204 has biased composition (low complexity); the sequence is QGPPGSAGRAGPRGQAGQPG. Residues 213-271 form the Collagen-like domain; it reads GRPGPQGPLGEPGAQGEPGVDGKDGALGAPGRKAENGRPGKRGKDGVAGVPGTRGKEGE. Basic and acidic residues predominate over residues 244–257; that stretch reads RKAENGRPGKRGKD.

This sequence belongs to the cuticular collagen family. In terms of assembly, collagen polypeptide chains are complexed within the cuticle by disulfide bonds and other types of covalent cross-links.

Probable cuticular collagen-like protein. Nematode cuticles are composed largely of collagen-like proteins. The cuticle functions both as an exoskeleton and as a barrier to protect the worm from its environment. Acts downstream of the Wnt signaling pathway, perhaps in the formation of the adult cuticle. The sequence is that of Cuticle collagen 49 from Caenorhabditis elegans.